Reading from the N-terminus, the 564-residue chain is Ribulokinase (564 aa).

The protein belongs to the ribulokinase family.

It carries out the reaction D-ribulose + ATP = D-ribulose 5-phosphate + ADP + H(+). The catalysed reaction is L-ribulose + ATP = L-ribulose 5-phosphate + ADP + H(+). The protein operates within carbohydrate degradation; L-arabinose degradation via L-ribulose; D-xylulose 5-phosphate from L-arabinose (bacterial route): step 2/3. This Geobacillus thermodenitrificans (strain NG80-2) protein is Ribulokinase.